The sequence spans 103 residues: MAGRSGVNDEELLRAIRVIKILYQSNPYPNDSGTRQARKNRRRRWRARQRQIRALSERILSSCVGGLQEPSTLPLPPLDRLSLNPEEDLGTSETEHPQGTATT.

Ser5 is subject to Phosphoserine; by host CK2. Positions 18-26 (VIKILYQSN) are homomultimerization. Polar residues predominate over residues 25-34 (SNPYPNDSGT). Disordered regions lie at residues 25–48 (SNPY…WRAR) and 66–103 (GLQE…TATT). The short motif at 34 to 50 (TRQARKNRRRRWRARQR) is the Nuclear localization signal and RNA-binding (RRE) element. A compositionally biased stretch (basic residues) spans 36–48 (QARKNRRRRWRAR). The Nuclear export signal and binding to XPO1 motif lies at 73-84 (LPLPPLDRLSLN). Ser92 is modified (phosphoserine; by host).

The protein belongs to the HIV-1 REV protein family. As to quaternary structure, homomultimer; when bound to the RRE. Multimeric assembly is essential for activity and may involve XPO1. Binds to human KPNB1, XPO1, TNPO1, RANBP5 and IPO7. Interacts with the viral Integrase. Interacts with human KHDRBS1. Interacts with human NAP1; this interaction decreases Rev multimerization and stimulates its activity. Interacts with human DEAD-box helicases DDX3 and DDX24; these interactions may serve for viral RNA export to the cytoplasm and packaging, respectively. Interacts with human PSIP1; this interaction may inhibit HIV-1 DNA integration by promoting dissociation of the Integrase-LEDGF/p75 complex. Post-translationally, asymmetrically arginine dimethylated at one site by host PRMT6. Methylation impairs the RNA-binding activity and export of viral RNA from the nucleus to the cytoplasm. In terms of processing, phosphorylated by protein kinase CK2. Presence of, and maybe binding to the N-terminus of the regulatory beta subunit of CK2 is necessary for CK2-mediated Rev's phosphorylation.

Its subcellular location is the host nucleus. It is found in the host nucleolus. It localises to the host cytoplasm. Its function is as follows. Escorts unspliced or incompletely spliced viral pre-mRNAs (late transcripts) out of the nucleus of infected cells. These pre-mRNAs carry a recognition sequence called Rev responsive element (RRE) located in the env gene, that is not present in fully spliced viral mRNAs (early transcripts). This function is essential since most viral proteins are translated from unspliced or partially spliced pre-mRNAs which cannot exit the nucleus by the pathway used by fully processed cellular mRNAs. Rev itself is translated from a fully spliced mRNA that readily exits the nucleus. Rev's nuclear localization signal (NLS) binds directly to KPNB1/Importin beta-1 without previous binding to KPNA1/Importin alpha-1. KPNB1 binds to the GDP bound form of RAN (Ran-GDP) and targets Rev to the nucleus. In the nucleus, the conversion from Ran-GDP to Ran-GTP dissociates Rev from KPNB1 and allows Rev's binding to the RRE in viral pre-mRNAs. Rev multimerization on the RRE via cooperative assembly exposes its nuclear export signal (NES) to the surface. Rev can then form a complex with XPO1/CRM1 and Ran-GTP, leading to nuclear export of the complex. Conversion from Ran-GTP to Ran-GDP mediates dissociation of the Rev/RRE/XPO1/RAN complex, so that Rev can return to the nucleus for a subsequent round of export. Beside KPNB1, also seems to interact with TNPO1/Transportin-1, RANBP5/IPO5 and IPO7/RANBP7 for nuclear import. The nucleoporin-like HRB/RIP is an essential cofactor that probably indirectly interacts with Rev to release HIV RNAs from the perinuclear region to the cytoplasm. This Pan troglodytes (Chimpanzee) protein is Protein Rev.